We begin with the raw amino-acid sequence, 967 residues long: Protein moonraker (967 aa).

A disordered region spans residues 178 to 201 (SHPGQSDLTVPNSPPTHDPGLQPH). Over residues 179–188 (HPGQSDLTVP) the composition is skewed to polar residues. Phosphoserine occurs at positions 287 and 409. 2 disordered regions span residues 401-431 (ALER…SRPS) and 490-601 (KAGK…SHLT). Residues 525-543 (QSQPHSKSRVQQTTVSSRL) are compositionally biased toward polar residues. A compositionally biased stretch (pro residues) spans 557-568 (WIPPNPTSPPAS). Residues 616–642 (AETSKRLKELEELKAKEIDSMQKQRLD) adopt a coiled-coil conformation. Ser-700 and Ser-826 each carry phosphoserine. The tract at residues 849 to 872 (RPCNGNSLDESVGTEEGSEKREAP) is disordered. Residues 885-967 (GRAPLFVPPG…FTSEFLEAAT (83 aa)) are necessary and sufficient for CEP20-binding.

Interacts with CEP63. Interacts with WDR62. Forms a complex with OFD1 and CEP20/FOR20. Interacts with PCM1.

The protein resides in the cytoplasm. It is found in the cytoskeleton. Its subcellular location is the microtubule organizing center. It localises to the centrosome. The protein localises to the centriole. The protein resides in the centriolar satellite. Functionally, involved in centriole duplication. Positively regulates CEP63 centrosomal localization. Required for WDR62 centrosomal localization and promotes the centrosomal localization of CDK2. May play a role in cilium assembly. The sequence is that of Protein moonraker (KIAA0753) from Homo sapiens (Human).